A 199-amino-acid polypeptide reads, in one-letter code: Large ribosomal subunit protein bL25 (199 aa).

It belongs to the bacterial ribosomal protein bL25 family. CTC subfamily. As to quaternary structure, part of the 50S ribosomal subunit; part of the 5S rRNA/L5/L18/L25 subcomplex. Contacts the 5S rRNA. Binds to the 5S rRNA independently of L5 and L18.

This is one of the proteins that binds to the 5S RNA in the ribosome where it forms part of the central protuberance. The polypeptide is Large ribosomal subunit protein bL25 (Pseudomonas fluorescens (strain ATCC BAA-477 / NRRL B-23932 / Pf-5)).